A 266-amino-acid chain; its full sequence is Dihydropteroate synthase (266 aa).

Residues 12-260 (AAIMGILNVT…DVKANQDIVA (249 aa)) form the Pterin-binding domain. A Mg(2+)-binding site is contributed by N19. (7,8-dihydropterin-6-yl)methyl diphosphate is bound by residues T59, D93, N112, D176, K212, and 248-250 (RVH).

It belongs to the DHPS family. In terms of assembly, homodimer or homotrimer. Mg(2+) serves as cofactor.

The catalysed reaction is (7,8-dihydropterin-6-yl)methyl diphosphate + 4-aminobenzoate = 7,8-dihydropteroate + diphosphate. It participates in cofactor biosynthesis; tetrahydrofolate biosynthesis; 7,8-dihydrofolate from 2-amino-4-hydroxy-6-hydroxymethyl-7,8-dihydropteridine diphosphate and 4-aminobenzoate: step 1/2. Its function is as follows. Catalyzes the condensation of para-aminobenzoate (pABA) with 6-hydroxymethyl-7,8-dihydropterin diphosphate (DHPt-PP) to form 7,8-dihydropteroate (H2Pte), the immediate precursor of folate derivatives. This is Dihydropteroate synthase (folP) from Streptococcus pyogenes serotype M6 (strain ATCC BAA-946 / MGAS10394).